The sequence spans 314 residues: Ribosomal protein uL3 glutamine methyltransferase (314 aa).

This sequence belongs to the protein N5-glutamine methyltransferase family. PrmB subfamily.

The enzyme catalyses L-glutaminyl-[ribosomal protein uL3] + S-adenosyl-L-methionine = N(5)-methyl-L-glutaminyl-[ribosomal protein uL3] + S-adenosyl-L-homocysteine + H(+). Functionally, methylates large ribosomal subunit protein uL3 on a specific glutamine residue. The sequence is that of Ribosomal protein uL3 glutamine methyltransferase from Vibrio cholerae serotype O1 (strain ATCC 39315 / El Tor Inaba N16961).